We begin with the raw amino-acid sequence, 105 residues long: Zinc metalloproteinase/disintegrin (105 aa).

Residues 1 to 3 (DEP) form the Peptidase M12B domain. The 86-residue stretch at 11–96 (PPVCGNYFVE…AECTDRFQRN (86 aa)) folds into the Disintegrin domain. Intrachain disulfides connect Cys-25/Cys-43, Cys-27/Cys-38, Cys-37/Cys-60, Cys-51/Cys-57, Cys-56/Cys-82, and Cys-69/Cys-89. A D/ECD-tripeptide motif is present at residues 75-77 (ECD). Positions 99–105 (PCQNNNG) are excised as a propeptide.

This sequence belongs to the venom metalloproteinase (M12B) family. P-III subfamily. As to quaternary structure, monomer. The cofactor is Zn(2+). Expressed by the venom gland.

Its subcellular location is the secreted. Its function is as follows. Impairs hemostasis in the envenomed animal. Functionally, inhibits platelet aggregation induced by ADP, thrombin, platelet-activating factor and collagen. Acts by inhibiting fibrinogen interaction with platelet receptors GPIIb/GPIIIa (ITGA2B/ITGB3). This is Zinc metalloproteinase/disintegrin from Gloydius brevicauda (Korean slamosa snake).